A 547-amino-acid chain; its full sequence is Glucose-6-phosphate isomerase (547 aa).

The active-site Proton donor is the E351. Catalysis depends on residues H382 and K509.

Belongs to the GPI family.

It is found in the cytoplasm. The catalysed reaction is alpha-D-glucose 6-phosphate = beta-D-fructose 6-phosphate. It participates in carbohydrate biosynthesis; gluconeogenesis. The protein operates within carbohydrate degradation; glycolysis; D-glyceraldehyde 3-phosphate and glycerone phosphate from D-glucose: step 2/4. Its function is as follows. Catalyzes the reversible isomerization of glucose-6-phosphate to fructose-6-phosphate. The protein is Glucose-6-phosphate isomerase of Coxiella burnetii (strain Dugway 5J108-111).